The following is a 319-amino-acid chain: Myoblast determination protein 1 (319 aa).

A Peptide (Met-Gly) (interchain with G-Cter in ubiquitin) cross-link involves residue Met1. An N6-methyllysine; by EHMT2 modification is found at Lys104. The region spanning 109–160 is the bHLH domain; that stretch reads DRRKAATMRERRRLSKVNEAFETLKRCTSSNPNQRLPKVEILRNAIRYIEGL. Disordered regions lie at residues 174–222 and 267–319; these read AAAA…GARR and PALL…YQVL. Polar residues predominate over residues 197 to 207; sequence SDASSPRSNCS. Residues 267 to 276 show a composition bias toward low complexity; sequence PALLLADAPP.

Efficient DNA binding requires dimerization with another bHLH protein. Seems to form active heterodimers with ITF-2. Interacts with SUV39H1. Interacts with DDX5. Interacts with CHD2. Interacts with TSC22D3. Interacts with SETD3. Interacts with P-TEFB complex; promotes the transcriptional activity of MYOD1 through its CDK9-mediated phosphorylation. Interacts with CSRP3. Interacts with NUPR1. In terms of processing, phosphorylated by CDK9. This phosphorylation promotes its function in muscle differentiation. Post-translationally, acetylated by a complex containing EP300 and PCAF. The acetylation is essential to activate target genes. Conversely, its deacetylation by SIRT1 inhibits its function. Ubiquitinated on the N-terminus; which is required for proteasomal degradation. In terms of processing, methylation at Lys-104 by EHMT2/G9a inhibits myogenic activity.

Its subcellular location is the nucleus. In terms of biological role, acts as a transcriptional activator that promotes transcription of muscle-specific target genes and plays a role in muscle differentiation. Together with MYF5 and MYOG, co-occupies muscle-specific gene promoter core region during myogenesis. Induces fibroblasts to differentiate into myoblasts. Interacts with and is inhibited by the twist protein. This interaction probably involves the basic domains of both proteins. The sequence is that of Myoblast determination protein 1 (MYOD1) from Ovis aries (Sheep).